The chain runs to 707 residues: Dendrin (707 aa).

Disordered stretches follow at residues 1–22 (MLDG…DEES), 67–86 (QNRT…RRPW), 94–195 (ATNW…PWGG), 213–273 (AGTA…KKRL), and 342–377 (TEVA…GSEE). Positions 103–134 (AEVRAREQEKRKAASQEREAKETERKRRKAGG) form a coiled coil. Positions 105–127 (VRAREQEKRKAASQEREAKETER) are enriched in basic and acidic residues. Positions 113–131 (RKAASQEREAKETERKRRK) are nuclear localization. Residues 186-236 (GVAWAGPWGGRRPGPPSYEAHLLLRGAAGTAPRRRWDRPPPYVAPPSYEGP) form an interaction with MAGI2 region. Positions 340-434 (PVTEVALSGS…LEVWKVTRRA (95 aa)) are interaction with ACTN1. Basic residues predominate over residues 359–369 (PRSRQHLRGSR). Residue serine 387 is modified to Phosphoserine. Disordered stretches follow at residues 389 to 421 (KKPP…EGTE) and 517 to 707 (RVLN…GKRE). The interval 406–707 (GGTGWKESLG…TRKTPQGKRE (302 aa)) is interaction with CD2AP and NPHS1. Composition is skewed to basic and acidic residues over residues 524-544 (EGRE…EERS) and 692-707 (GLVR…GKRE).

In terms of assembly, forms a ternary complex with MAGI2 and SH3KBP1; recruits DDN to the cytoplasm. Interacts with MAGI1. Interacts with ACTN1 and may interact with WWC1. Interacts with the podocyte slit diaphragm proteins CD2AP, NPHS1 and NPHS2; the interaction with CD2AP and NPHS1 is direct. Specifically expressed in forebrain structures, particularly in neocortex, olfactory bulb, hippocampus, caudate-putamen, and limbic system (at protein level). Also detected in spleen, liver, kidney and placenta (at protein level).

It localises to the cell projection. The protein resides in the dendritic spine membrane. It is found in the cytoplasm. The protein localises to the endoplasmic reticulum membrane. Its subcellular location is the perikaryon. It localises to the nucleus. Its function is as follows. Promotes apoptosis of kidney glomerular podocytes. Podocytes are highly specialized cells essential to the ultrafiltration of blood, resulting in the extraction of urine and the retention of protein. The sequence is that of Dendrin (Ddn) from Rattus norvegicus (Rat).